A 359-amino-acid polypeptide reads, in one-letter code: 3-dehydroquinate synthase (359 aa).

Residues 71 to 76 (DGEAYK), 105 to 109 (GVIGD), 129 to 130 (TT), lysine 142, and lysine 151 each bind NAD(+). Positions 184, 247, and 264 each coordinate Zn(2+).

Belongs to the sugar phosphate cyclases superfamily. Dehydroquinate synthase family. The cofactor is Co(2+). Requires Zn(2+) as cofactor. NAD(+) is required as a cofactor.

It localises to the cytoplasm. The catalysed reaction is 7-phospho-2-dehydro-3-deoxy-D-arabino-heptonate = 3-dehydroquinate + phosphate. It participates in metabolic intermediate biosynthesis; chorismate biosynthesis; chorismate from D-erythrose 4-phosphate and phosphoenolpyruvate: step 2/7. Catalyzes the conversion of 3-deoxy-D-arabino-heptulosonate 7-phosphate (DAHP) to dehydroquinate (DHQ). This is 3-dehydroquinate synthase from Burkholderia ambifaria (strain MC40-6).